The chain runs to 1169 residues: DNA repair protein RAD5 (1169 aa).

Ser2 is modified (N-acetylserine). Phosphoserine is present on residues Ser20, Ser23, Ser129, and Ser130. The segment covering 302–317 (MKRRRTEGGNKREKDN) has biased composition (basic and acidic residues). The interval 302-327 (MKRRRTEGGNKREKDNGNFGRTLTET) is disordered. Residues 519 to 730 (PILKTMIKGG…YSLVKFLELD (212 aa)) enclose the Helicase ATP-binding domain. 532–539 (DEMGLGKT) lines the ATP pocket. The DEGH box motif lies at 681-684 (DEGH). An RING-type zinc finger spans residues 914-961 (CSICTTEPMDLDKALFTECGHSFCEKCLFEYIEFQNSKNLGLKCPNCR). The Helicase C-terminal domain occupies 995–1165 (KITALLKELQ…RRKRRIEEIQ (171 aa)).

This sequence belongs to the SNF2/RAD54 helicase family. In terms of assembly, homodimer. Interacts with POL30, RAD18, UBC9 and UBC13. The cofactor is Mg(2+). Requires Mn(2+) as cofactor. Ca(2+) serves as cofactor.

The protein localises to the cytoplasm. It is found in the nucleus. Its function is as follows. Probable helicase, member of the UBC2/RAD6 epistasis group. Functions with the DNA repair protein RAD18 in error-free postreplication DNA repair. Involved in the maintenance of wild-type rates of instability of simple repetitive sequences such as poly(GT) repeats. Seems to be involved in maintaining a balance which acts in favor of error-prone non-homologous joining during DNA double-strand breaks repairs. Recruits the UBC13-MMS2 dimer to chromatin for DNA repair. This Saccharomyces cerevisiae (strain ATCC 204508 / S288c) (Baker's yeast) protein is DNA repair protein RAD5 (RAD5).